We begin with the raw amino-acid sequence, 82 residues long: Mu-conotoxin GVIIJ (82 aa).

The N-terminal stretch at 1-22 (MKLTCVVIVAALLLTACQLITA) is a signal peptide. A propeptide spanning residues 23–47 (LDCGGTQKHRALRSTIKLSLLRQHR) is cleaved from the precursor. 6'-bromotryptophan is present on W49. Cystine bridges form between C50–C65, C57–C69, and C64–C76. At P53 the chain carries 4-hydroxyproline. C71 is an a protein binding site.

This sequence belongs to the conotoxin O1 superfamily. Post-translationally, cys-71 is a key residue that tethers to the channel by covalent attachment, leading to nearly irreversible inhibition (k(off) very low). In order to determine the solution structure without dimerization, this residue was mutated to Cys. Expressed by the venom duct.

The protein resides in the secreted. In terms of biological role, mu-conotoxins block voltage-gated sodium channels (Nav). This toxin (GVIIJ(SSG)) blocks Nav1.1/SCN1A (Kd=11 nM), Nav1.2/SCN2A (Kd=11 nM), Nav1.3/SCN3A (Kd=15 nM), Nav1.4/SCN4A (Kd=4.7 nM), Nav1.6/SCN8A (Kd=360 nM) and Nav1.7/SCN9A (Kd=41 nM). It binds the channel at the newly described site 8, which is composed by two surfaces whose one contains a non-disulfide-bonded cysteine (which is free to covalently bind the toxin Cys-71). It is noteworthy that coexpression of subunits beta-2 or beta-4 (but not beta-1 or beta-3) protects rNav1.1-1.7 against block by the toxin, since these subunits (thanks to their extracellular domain) covalently bind to the key cysteine of the channel, thus preventing the covalent binding of the toxin. The protein is Mu-conotoxin GVIIJ of Conus geographus (Geography cone).